Here is a 739-residue protein sequence, read N- to C-terminus: AN1-type zinc finger protein 4 (739 aa).

In terms of domain architecture, Ubiquitin-like spans 54–129 (MELFIETLTG…LKLVLAMRGG (76 aa)). Over residues 246–255 (KPKKVVKVKP) the composition is skewed to basic residues. Disordered regions lie at residues 246-270 (KPKKVVKVKPRPPLAPRPTSSSTAA) and 287-316 (LPSGNAHLPETSRNAGPSPAAQAPADRPVS). Residues 673–720 (KKIMKHCFLCGKKTGLATSFECRCGNNFCASHRYAEAHGCTYDYKSAG) form an AN1-type zinc finger. Residues cysteine 679, cysteine 682, cysteine 694, cysteine 696, cysteine 701, histidine 704, histidine 710, and cysteine 712 each contribute to the Zn(2+) site.

The polypeptide is AN1-type zinc finger protein 4 (Zfand4) (Mus musculus (Mouse)).